The sequence spans 282 residues: Acyl-CoA-binding domain-containing protein 6 (282 aa).

Residues 1-39 (MATPFLPSGATTGDSGGELSSGDDSGDMESFQTPEAEGT) are disordered. Ser41 carries the phosphoserine modification. The ACB domain maps to 42–127 (LAELFEKAAA…VKKLDPGWNP (86 aa)). Residues 69–73 (YARFK) and Lys95 contribute to the an acyl-CoA site. A Phosphoserine modification is found at Ser106. Position 114 (Tyr114) interacts with an acyl-CoA. ANK repeat units lie at residues 191 to 220 (EGRA…GINC) and 224 to 253 (EGQT…DPTL).

In terms of assembly, monomer.

The protein localises to the cytoplasm. The protein resides in the nucleus. Binds long-chain acyl-coenzyme A molecules with a strong preference for unsaturated C18:1-CoA, lower affinity for unsaturated C20:4-CoA, and very weak affinity for saturated C16:0-CoA. Does not bind fatty acids. Plays a role in protein N-myristoylation. In Mus musculus (Mouse), this protein is Acyl-CoA-binding domain-containing protein 6 (Acbd6).